Reading from the N-terminus, the 368-residue chain is snRNA-activating protein complex subunit 1 (368 aa).

The interval 1-168 (MGTPPGLQTD…EEFKDPSDRV (168 aa)) is SNAPC3-binding. The interval 164–268 (PSDRVMKLIT…AESLAKIKSK (105 aa)) is SNAPC4-binding. Disordered stretches follow at residues 224–257 (QQWHKDRKNPSLKSKTNDGEEKMEGNSQETERCE) and 275–368 (QASK…RRKH). A compositionally biased stretch (basic and acidic residues) spans 238–257 (KTNDGEEKMEGNSQETERCE). Phosphoserine is present on residues S289 and S290.

In terms of assembly, part of the SNAPc complex composed of 5 subunits: SNAPC1, SNAPC2, SNAPC3, SNAPC4 and SNAPC5. SNAPC1 interacts with SNAPC3, SNAPC4 and TBP.

The protein resides in the nucleus. Its function is as follows. Part of the SNAPc complex required for the transcription of both RNA polymerase II and III small-nuclear RNA genes. Binds to the proximal sequence element (PSE), a non-TATA-box basal promoter element common to these 2 types of genes. Recruits TBP and BRF2 to the U6 snRNA TATA box. The polypeptide is snRNA-activating protein complex subunit 1 (SNAPC1) (Homo sapiens (Human)).